The sequence spans 265 residues: MSGALQWWETIGAASAQYNLDPRLVAGVVQTESSGNPRTTSGVGAMGLMQLMPATAKSLGVTNAYDPTQNIYGGAALLRENLDRYGDVNTALLAYHGGTNQANWGAKTKSYPGKVMKNINLLFGNSGPVVTPAAGIAPVSGAQEMTAVNISDYTAPDLTGLTMGAGSPDFTGGASGSWGEENIPWYRVDKHVANAAGSAYDAVTDAVSAPVEAAGNYALRGVVIIAAVAIVVVGLYFLFQDEINSAAMKMIPAGKAAGAAAKALA.

Residues Asn-19 to Gly-98 are slt-type domain. Residue Glu-32 is part of the active site. The chain crosses the membrane as a helical span at residues Leu-219–Phe-239.

It belongs to the transglycosylase Slt family. In terms of assembly, heteromultimer composed of proteins P7 and P14.

The protein resides in the virion membrane. It carries out the reaction Exolytic cleavage of the (1-&gt;4)-beta-glycosidic linkage between N-acetylmuramic acid (MurNAc) and N-acetylglucosamine (GlcNAc) residues in peptidoglycan, from either the reducing or the non-reducing ends of the peptidoglycan chains, with concomitant formation of a 1,6-anhydrobond in the MurNAc residue.. Functionally, component of the phage ejection machinery which acts as an exolysin. Muralytic protein involved in host peptidoglycan digestion necessary for viral DNA entry into the host cell. Does not display any enzymatic activity. Required for DNA injection in the membrane transformation event. Involved in the formation of the membrane tail tube to connect the virus interior with the host cytosol. Essential for viral infectivity. In Acinetobacter calcoaceticus (Arthrobacter siderocapsulatus), this protein is Transglycosylase (VII).